Reading from the N-terminus, the 512-residue chain is Maturase K (512 aa).

Belongs to the intron maturase 2 family. MatK subfamily.

The protein resides in the plastid. It localises to the chloroplast. Usually encoded in the trnK tRNA gene intron. Probably assists in splicing its own and other chloroplast group II introns. The protein is Maturase K of Lilium henryi (Henry's lily).